The sequence spans 1838 residues: Nuclear pore complex protein NUP205 (1838 aa).

Belongs to the NUP186/NUP192/NUP205 family. Part of the nuclear pore complex (NPC). The NPC has an eight-fold symmetrical structure comprising a central transport channel and two rings, the cytoplasmic and nuclear rings, to which eight filaments are attached. The cytoplasmic filaments have loose ends, while the nuclear filaments are joined in a distal ring, forming a nuclear basket. NPCs are highly dynamic in configuration and composition, and can be devided in 3 subcomplexes, the NUP62 subcomplex, the NUP107-160 subcomplex and the NUP93 subcomplex, containing approximately 30 different nucleoporin proteins.

Its subcellular location is the nucleus envelope. The protein localises to the nucleus. It is found in the nuclear pore complex. This chain is Nuclear pore complex protein NUP205, found in Arabidopsis thaliana (Mouse-ear cress).